The primary structure comprises 390 residues: GDSL esterase/lipase At1g28580 (390 aa).

Residues 1 to 28 (MAYPGSPILMKLLVFIFLSTFVVTNVSS) form the signal peptide. Serine 44 acts as the Nucleophile in catalysis. Residues asparagine 140 and asparagine 322 are each glycosylated (N-linked (GlcNAc...) asparagine). Active-site residues include aspartate 347 and histidine 350.

This sequence belongs to the 'GDSL' lipolytic enzyme family.

The protein resides in the secreted. This Arabidopsis thaliana (Mouse-ear cress) protein is GDSL esterase/lipase At1g28580.